The primary structure comprises 276 residues: Mitochondrial outer membrane protein porin of 34 kDa (276 aa).

It belongs to the eukaryotic mitochondrial porin (TC 1.B.8.1) family.

It is found in the mitochondrion outer membrane. Its function is as follows. Forms a channel through the cell membrane that allows diffusion of small hydrophilic molecules. The channel adopts an open conformation at low or zero membrane potential and a closed conformation at potentials above 30-40 mV. The open state has a weak anion selectivity whereas the closed state is cation-selective. The polypeptide is Mitochondrial outer membrane protein porin of 34 kDa (Solanum tuberosum (Potato)).